The chain runs to 757 residues: 5-methyltetrahydropteroyltriglutamate--homocysteine methyltransferase (757 aa).

Lys-18 and Asn-116 together coordinate 5-methyltetrahydropteroyltri-L-glutamate. 437-439 (IGS) is a binding site for L-homocysteine. L-methionine-binding positions include 437–439 (IGS) and Glu-490. 5-methyltetrahydropteroyltri-L-glutamate is bound by residues 521–522 (RC) and Trp-567. An L-homocysteine-binding site is contributed by Asp-605. Asp-605 provides a ligand contact to L-methionine. The Zn(2+) site is built by His-647, Cys-649, His-658, Asp-662, and Glu-671. His-701 acts as the Proton donor in catalysis. Cys-733 contributes to the Zn(2+) binding site.

This sequence belongs to the vitamin-B12 independent methionine synthase family. Zn(2+) serves as cofactor. In terms of tissue distribution, expressed in pollen (at protein level).

The catalysed reaction is 5-methyltetrahydropteroyltri-L-glutamate + L-homocysteine = tetrahydropteroyltri-L-glutamate + L-methionine. It functions in the pathway amino-acid biosynthesis; L-methionine biosynthesis via de novo pathway; L-methionine from L-homocysteine (MetE route): step 1/1. Its function is as follows. Catalyzes the transfer of a methyl group from 5-methyltetrahydrofolate to homocysteine resulting in methionine formation. In Kali turgidum (Prickly saltwort), this protein is 5-methyltetrahydropteroyltriglutamate--homocysteine methyltransferase.